Consider the following 254-residue polypeptide: Small ribosomal subunit protein uS2 (254 aa).

Residues 228–254 (DRGAEKEVEAAEEAPAAEAEAAPATEE) form a disordered region. Residues 240–254 (EAPAAEAEAAPATEE) are compositionally biased toward low complexity.

This sequence belongs to the universal ribosomal protein uS2 family.

The protein is Small ribosomal subunit protein uS2 of Flavobacterium johnsoniae (strain ATCC 17061 / DSM 2064 / JCM 8514 / BCRC 14874 / CCUG 350202 / NBRC 14942 / NCIMB 11054 / UW101) (Cytophaga johnsonae).